The primary structure comprises 424 residues: Folate-like transporter 3 (424 aa).

A glycan (N-linked (GlcNAc...) asparagine) is linked at Asn35. 5 helical membrane passes run 55–75, 78–98, 101–119, 136–156, and 164–184; these read VALIPSFLLTDVLLYKPILII, LSYFACWMIFVFGRSVWCMQL, LFYGWATATEIAYFAYIYV, ALLVGRFLAYTLAQLLIGLNW, and IINLVSMTFAVFLAAILPHVP. A glycan (N-linked (GlcNAc...) asparagine) is linked at Asn254. Helical transmembrane passes span 313–333, 361–381, and 392–412; these read GLLFWMSQSHEIIILYICYII, LFGINTFVALALQSILTAIVI, and FVVYSGYHIVVATLFGIIFGI.

The protein belongs to the reduced folate carrier (RFC) transporter (TC 2.A.48) family.

It is found in the membrane. This is Folate-like transporter 3 (folt-3) from Caenorhabditis elegans.